Here is a 190-residue protein sequence, read N- to C-terminus: Xanthine phosphoribosyltransferase 2 (190 aa).

The xanthine site is built by Leu-20 and Asn-27. 129-133 (ANGCA) lines the 5-phospho-alpha-D-ribose 1-diphosphate pocket. Lys-157 serves as a coordination point for xanthine.

This sequence belongs to the purine/pyrimidine phosphoribosyltransferase family. Xpt subfamily. As to quaternary structure, homodimer.

The protein localises to the cytoplasm. It catalyses the reaction XMP + diphosphate = xanthine + 5-phospho-alpha-D-ribose 1-diphosphate. It participates in purine metabolism; XMP biosynthesis via salvage pathway; XMP from xanthine: step 1/1. Functionally, converts the preformed base xanthine, a product of nucleic acid breakdown, to xanthosine 5'-monophosphate (XMP), so it can be reused for RNA or DNA synthesis. The sequence is that of Xanthine phosphoribosyltransferase 2 from Clostridium botulinum (strain Langeland / NCTC 10281 / Type F).